Here is a 281-residue protein sequence, read N- to C-terminus: Sulfur carrier protein FdhD (281 aa).

C117 functions as the Cysteine persulfide intermediate in the catalytic mechanism.

The protein belongs to the FdhD family.

The protein resides in the cytoplasm. Its function is as follows. Required for formate dehydrogenase (FDH) activity. Acts as a sulfur carrier protein that transfers sulfur from IscS to the molybdenum cofactor prior to its insertion into FDH. The chain is Sulfur carrier protein FdhD from Xanthomonas axonopodis pv. citri (strain 306).